The sequence spans 294 residues: Bifunctional protein FolD (294 aa).

NADP(+)-binding positions include 164-166 (GRS), Ser-193, and Ile-234.

Belongs to the tetrahydrofolate dehydrogenase/cyclohydrolase family. As to quaternary structure, homodimer.

The catalysed reaction is (6R)-5,10-methylene-5,6,7,8-tetrahydrofolate + NADP(+) = (6R)-5,10-methenyltetrahydrofolate + NADPH. It catalyses the reaction (6R)-5,10-methenyltetrahydrofolate + H2O = (6R)-10-formyltetrahydrofolate + H(+). It functions in the pathway one-carbon metabolism; tetrahydrofolate interconversion. In terms of biological role, catalyzes the oxidation of 5,10-methylenetetrahydrofolate to 5,10-methenyltetrahydrofolate and then the hydrolysis of 5,10-methenyltetrahydrofolate to 10-formyltetrahydrofolate. The chain is Bifunctional protein FolD from Flavobacterium psychrophilum (strain ATCC 49511 / DSM 21280 / CIP 103535 / JIP02/86).